A 255-amino-acid polypeptide reads, in one-letter code: Geranylgeranylglyceryl phosphate synthase (255 aa).

Positions 34 and 64 each coordinate Mg(2+). Sn-glycerol 1-phosphate is bound by residues 182-188 (YLEAGSG), 213-214 (GG), and 235-236 (GN).

This sequence belongs to the GGGP/HepGP synthase family. Group II subfamily. Mg(2+) serves as cofactor.

The protein localises to the cytoplasm. It carries out the reaction sn-glycerol 1-phosphate + (2E,6E,10E)-geranylgeranyl diphosphate = sn-3-O-(geranylgeranyl)glycerol 1-phosphate + diphosphate. It participates in membrane lipid metabolism; glycerophospholipid metabolism. Its function is as follows. Prenyltransferase that catalyzes the transfer of the geranylgeranyl moiety of geranylgeranyl diphosphate (GGPP) to the C3 hydroxyl of sn-glycerol-1-phosphate (G1P). This reaction is the first ether-bond-formation step in the biosynthesis of archaeal membrane lipids. The polypeptide is Geranylgeranylglyceryl phosphate synthase (Saccharolobus islandicus (strain M.16.27) (Sulfolobus islandicus)).